We begin with the raw amino-acid sequence, 356 residues long: Solute carrier family 25 member 3 (356 aa).

A mitochondrion-targeting transit peptide spans 1–44; that stretch reads MFSSVAHLARANPFNAPHLQLVHDVSGPRSPPGPPRRSRHLAAA. The Mitochondrial intermembrane portion of the chain corresponds to 45–57; sequence AVEGYSCEFGSMK. 3 Solcar repeats span residues 57 to 141, 154 to 238, and 255 to 333; these read KYYA…FKAL, WRTS…TVEA, and EQLV…VKVY. The helical transmembrane segment at 58 to 80 threads the bilayer; that stretch reads YYALCGFGGVLSCGLTHTAVVPL. Residues 81-115 are Mitochondrial matrix-facing; sequence DLVKCRMQVDPQKYKGIFNGFSITLKEDGVRGLAK. Position 93 is an N6-acetyllysine (Lys93). At Lys106 the chain carries N6-methyllysine. A helical membrane pass occupies residues 116-135; the sequence is GWAPTLIGYSMQGLCKFGFY. Residues 136 to 155 are Mitochondrial intermembrane-facing; that stretch reads EVFKALYSNILGEENTYLWR. Residues 156 to 177 form a helical membrane-spanning segment; the sequence is TSLYLAASASAEFFADIALAPM. The Mitochondrial matrix segment spans residues 178-212; that stretch reads EAAKVRIQTQPGYANTLREAVPKMYKEEGLNAFYK. Position 190 is a phosphotyrosine (Tyr190). Residue Lys203 is modified to N6-acetyllysine. A helical membrane pass occupies residues 213-232; the sequence is GVAPVWMRQIPYTMMKFACF. Residues 233–255 are Mitochondrial intermembrane-facing; that stretch reads ERTVEALYKFVVPKPRSECTKAE. A helical membrane pass occupies residues 256-278; the sequence is QLVVTFVAGYIAGVFCAIVSHPA. At 279–308 the chain is on the mitochondrial matrix side; the sequence is DSVVSVLNKEKGSTASQVLQRLGFRGVWKG. Residues 309-327 form a helical membrane-spanning segment; sequence LFARIIMIGTLTALQWFIY. Over 328–356 the chain is Mitochondrial intermembrane; it reads DSVKVYFRLPRPPPPEMPESLKKKLGLTE.

Belongs to the mitochondrial carrier (TC 2.A.29) family. In terms of assembly, interacts with PPIF; the interaction is impaired by CsA.

It is found in the mitochondrion inner membrane. It catalyses the reaction phosphate(in) + H(+)(in) = phosphate(out) + H(+)(out). Its function is as follows. Inorganic ion transporter that transports phosphate or copper ions across the mitochondrial inner membrane into the matrix compartment. Mediates proton-coupled symport of phosphate ions necessary for mitochondrial oxidative phosphorylation of ADP to ATP. Transports copper ions probably in the form of anionic copper(I) complexes to maintain mitochondrial matrix copper pool and to supply copper for cytochrome C oxidase complex assembly. May also play a role in regulation of the mitochondrial permeability transition pore (mPTP). The polypeptide is Solute carrier family 25 member 3 (Rattus norvegicus (Rat)).